The primary structure comprises 572 residues: Sulfite reductase [NADPH] hemoprotein beta-component (572 aa).

C436, C442, C481, and C485 together coordinate [4Fe-4S] cluster. C485 contributes to the siroheme binding site.

This sequence belongs to the nitrite and sulfite reductase 4Fe-4S domain family. As to quaternary structure, alpha(8)-beta(8). The alpha component is a flavoprotein, the beta component is a hemoprotein. The cofactor is siroheme. [4Fe-4S] cluster is required as a cofactor.

The enzyme catalyses hydrogen sulfide + 3 NADP(+) + 3 H2O = sulfite + 3 NADPH + 4 H(+). It functions in the pathway sulfur metabolism; hydrogen sulfide biosynthesis; hydrogen sulfide from sulfite (NADPH route): step 1/1. Component of the sulfite reductase complex that catalyzes the 6-electron reduction of sulfite to sulfide. This is one of several activities required for the biosynthesis of L-cysteine from sulfate. The chain is Sulfite reductase [NADPH] hemoprotein beta-component from Bacillus pumilus (strain SAFR-032).